Consider the following 365-residue polypeptide: Phosphate acyltransferase (365 aa).

It belongs to the PlsX family. As to quaternary structure, homodimer. Probably interacts with PlsY.

It is found in the cytoplasm. It catalyses the reaction a fatty acyl-[ACP] + phosphate = an acyl phosphate + holo-[ACP]. The protein operates within lipid metabolism; phospholipid metabolism. In terms of biological role, catalyzes the reversible formation of acyl-phosphate (acyl-PO(4)) from acyl-[acyl-carrier-protein] (acyl-ACP). This enzyme utilizes acyl-ACP as fatty acyl donor, but not acyl-CoA. In Jannaschia sp. (strain CCS1), this protein is Phosphate acyltransferase.